We begin with the raw amino-acid sequence, 665 residues long: DNA mismatch repair protein MutL (665 aa).

The protein belongs to the DNA mismatch repair MutL/HexB family.

Its function is as follows. This protein is involved in the repair of mismatches in DNA. It is required for dam-dependent methyl-directed DNA mismatch repair. May act as a 'molecular matchmaker', a protein that promotes the formation of a stable complex between two or more DNA-binding proteins in an ATP-dependent manner without itself being part of a final effector complex. This is DNA mismatch repair protein MutL from Acidobacterium capsulatum (strain ATCC 51196 / DSM 11244 / BCRC 80197 / JCM 7670 / NBRC 15755 / NCIMB 13165 / 161).